A 446-amino-acid polypeptide reads, in one-letter code: Eukaryotic translation initiation factor 3 subunit E (446 aa).

One can recognise a PCI domain in the interval 256 to 425 (TDLFFSPAYI…GTVIMNHPPQ (170 aa)).

It belongs to the eIF-3 subunit E family. As to quaternary structure, component of the eukaryotic translation initiation factor 3 (eIF-3) complex.

The protein resides in the cytoplasm. Functionally, component of the eukaryotic translation initiation factor 3 (eIF-3) complex, which is involved in protein synthesis of a specialized repertoire of mRNAs and, together with other initiation factors, stimulates binding of mRNA and methionyl-tRNAi to the 40S ribosome. The eIF-3 complex specifically targets and initiates translation of a subset of mRNAs involved in cell proliferation. The sequence is that of Eukaryotic translation initiation factor 3 subunit E (int6) from Aspergillus terreus (strain NIH 2624 / FGSC A1156).